The sequence spans 251 residues: Probable transcriptional regulatory protein Amuc_0709 (251 aa).

This sequence belongs to the TACO1 family.

The protein localises to the cytoplasm. The chain is Probable transcriptional regulatory protein Amuc_0709 from Akkermansia muciniphila (strain ATCC BAA-835 / DSM 22959 / JCM 33894 / BCRC 81048 / CCUG 64013 / CIP 107961 / Muc).